The primary structure comprises 349 residues: Anthranilate phosphoribosyltransferase (349 aa).

5-phospho-alpha-D-ribose 1-diphosphate contacts are provided by residues Gly81, 84–85 (GD), Thr89, 91–94 (NVST), 109–117 (KHGNRAASS), and Ala121. Residue Gly81 coordinates anthranilate. A Mg(2+)-binding site is contributed by Ser93. Asn112 provides a ligand contact to anthranilate. Arg167 serves as a coordination point for anthranilate. Asp226 and Glu227 together coordinate Mg(2+).

The protein belongs to the anthranilate phosphoribosyltransferase family. As to quaternary structure, homodimer. It depends on Mg(2+) as a cofactor.

The catalysed reaction is N-(5-phospho-beta-D-ribosyl)anthranilate + diphosphate = 5-phospho-alpha-D-ribose 1-diphosphate + anthranilate. It participates in amino-acid biosynthesis; L-tryptophan biosynthesis; L-tryptophan from chorismate: step 2/5. Functionally, catalyzes the transfer of the phosphoribosyl group of 5-phosphorylribose-1-pyrophosphate (PRPP) to anthranilate to yield N-(5'-phosphoribosyl)-anthranilate (PRA). The chain is Anthranilate phosphoribosyltransferase from Methylocella silvestris (strain DSM 15510 / CIP 108128 / LMG 27833 / NCIMB 13906 / BL2).